The following is a 215-amino-acid chain: uncharacterized protein (215 aa).

A run of 6 helical transmembrane segments spans residues 21–40, 50–69, 95–117, 122–144, 157–179, and 185–207; these read IIKY…VLIN, LIFS…TIIF, FVAI…YVFF, LEIA…LVVL, NFVG…LILQ, and LIFI…SAYL.

Belongs to the CcmB/CycW/HelB family.

It is found in the cell membrane. This is an uncharacterized protein from Rickettsia prowazekii (strain Madrid E).